The chain runs to 383 residues: Chaperone protein DnaJ (383 aa).

The J domain maps to 4–68; that stretch reads DLYETLNVSR…DQRARYDRFG (65 aa). The CR-type zinc-finger motif lies at 139 to 221; it reads GGEKEITINH…CSGRGRNQKQ (83 aa). Zn(2+)-binding residues include C152, C155, C169, C172, C195, C198, C209, and C212. 4 CXXCXGXG motif repeats span residues 152–159, 169–176, 195–202, and 209–216; these read CETCRGSG, CRNCGGQG, CPNCQGTG, and CPTCSGRG.

Belongs to the DnaJ family. Homodimer. Zn(2+) serves as cofactor.

It is found in the cytoplasm. Functionally, participates actively in the response to hyperosmotic and heat shock by preventing the aggregation of stress-denatured proteins and by disaggregating proteins, also in an autonomous, DnaK-independent fashion. Unfolded proteins bind initially to DnaJ; upon interaction with the DnaJ-bound protein, DnaK hydrolyzes its bound ATP, resulting in the formation of a stable complex. GrpE releases ADP from DnaK; ATP binding to DnaK triggers the release of the substrate protein, thus completing the reaction cycle. Several rounds of ATP-dependent interactions between DnaJ, DnaK and GrpE are required for fully efficient folding. Also involved, together with DnaK and GrpE, in the DNA replication of plasmids through activation of initiation proteins. The sequence is that of Chaperone protein DnaJ from Gloeobacter violaceus (strain ATCC 29082 / PCC 7421).